Reading from the N-terminus, the 305-residue chain is Small ribosomal subunit protein uS3 (305 aa).

Residues 17–86 (IDEFFSEELS…DPQVDVQEVD (70 aa)) enclose the KH type-2 domain. 2 stretches are compositionally biased toward acidic residues: residues 207–262 (EPEG…EAET) and 272–305 (AAEE…EEET). Positions 207-305 (EPEGDVEELL…EDETTDEEET (99 aa)) are disordered.

Belongs to the universal ribosomal protein uS3 family. Part of the 30S ribosomal subunit.

Binds the lower part of the 30S subunit head. The protein is Small ribosomal subunit protein uS3 of Natronomonas pharaonis (strain ATCC 35678 / DSM 2160 / CIP 103997 / JCM 8858 / NBRC 14720 / NCIMB 2260 / Gabara) (Halobacterium pharaonis).